A 189-amino-acid chain; its full sequence is UPF0149 protein VF_2102 (189 aa).

The protein belongs to the UPF0149 family.

This chain is UPF0149 protein VF_2102, found in Aliivibrio fischeri (strain ATCC 700601 / ES114) (Vibrio fischeri).